The chain runs to 471 residues: Bifunctional protein GlmU (471 aa).

The segment at 1 to 232 (MSDITAVLLA…EEDALAPNDR (232 aa)) is pyrophosphorylase. Residues 9–12 (LAAG), lysine 23, glutamine 73, 78–79 (GT), 102–104 (YGD), glycine 141, glutamate 157, and asparagine 230 each bind UDP-N-acetyl-alpha-D-glucosamine. Residue aspartate 104 coordinates Mg(2+). Asparagine 230 is a binding site for Mg(2+). A linker region spans residues 233–253 (VELARAEARLRRQINERHMRN). Residues 254–471 (GVTIINPDAT…RQRKMNREGT (218 aa)) form an N-acetyltransferase region. UDP-N-acetyl-alpha-D-glucosamine contacts are provided by arginine 335 and lysine 353. Catalysis depends on histidine 365, which acts as the Proton acceptor. Tyrosine 368 and asparagine 379 together coordinate UDP-N-acetyl-alpha-D-glucosamine. Acetyl-CoA-binding positions include alanine 382, 388 to 389 (NY), alanine 425, and arginine 444.

This sequence in the N-terminal section; belongs to the N-acetylglucosamine-1-phosphate uridyltransferase family. The protein in the C-terminal section; belongs to the transferase hexapeptide repeat family. In terms of assembly, homotrimer. Mg(2+) is required as a cofactor.

The protein resides in the cytoplasm. It catalyses the reaction alpha-D-glucosamine 1-phosphate + acetyl-CoA = N-acetyl-alpha-D-glucosamine 1-phosphate + CoA + H(+). The enzyme catalyses N-acetyl-alpha-D-glucosamine 1-phosphate + UTP + H(+) = UDP-N-acetyl-alpha-D-glucosamine + diphosphate. It functions in the pathway nucleotide-sugar biosynthesis; UDP-N-acetyl-alpha-D-glucosamine biosynthesis; N-acetyl-alpha-D-glucosamine 1-phosphate from alpha-D-glucosamine 6-phosphate (route II): step 2/2. Its pathway is nucleotide-sugar biosynthesis; UDP-N-acetyl-alpha-D-glucosamine biosynthesis; UDP-N-acetyl-alpha-D-glucosamine from N-acetyl-alpha-D-glucosamine 1-phosphate: step 1/1. It participates in bacterial outer membrane biogenesis; LPS lipid A biosynthesis. Catalyzes the last two sequential reactions in the de novo biosynthetic pathway for UDP-N-acetylglucosamine (UDP-GlcNAc). The C-terminal domain catalyzes the transfer of acetyl group from acetyl coenzyme A to glucosamine-1-phosphate (GlcN-1-P) to produce N-acetylglucosamine-1-phosphate (GlcNAc-1-P), which is converted into UDP-GlcNAc by the transfer of uridine 5-monophosphate (from uridine 5-triphosphate), a reaction catalyzed by the N-terminal domain. The chain is Bifunctional protein GlmU from Symbiobacterium thermophilum (strain DSM 24528 / JCM 14929 / IAM 14863 / T).